The following is a 228-amino-acid chain: Response regulator MprA (228 aa).

Residues 2–116 (RILVVDDDRA…ELLARMRALL (115 aa)) form the Response regulatory domain. Asp46 is modified (4-aspartylphosphate). A DNA-binding region (ompR/PhoB-type) is located at residues 127–225 (SVAMTFSDLT…VRGVGYVLRE (99 aa)).

Phosphorylated and dephosphorylated by MprB.

It is found in the cytoplasm. Its function is as follows. Member of the two-component regulatory system MprB/MprA which contributes to maintaining a balance among several systems involved in stress resistance and is required for establishment and maintenance of persistent infection in the host. Functions as a transcriptional regulator that recognizes a 19-bp nucleotide motif comprizing two loosely conserved 8-bp direct DNA-binding motif repeats separated by a 3-bp spacer region. This chain is Response regulator MprA (mprA), found in Mycobacterium avium (strain 104).